Reading from the N-terminus, the 432-residue chain is Glutamate-1-semialdehyde 2,1-aminomutase (432 aa).

K265 is subject to N6-(pyridoxal phosphate)lysine.

It belongs to the class-III pyridoxal-phosphate-dependent aminotransferase family. HemL subfamily. In terms of assembly, homodimer. It depends on pyridoxal 5'-phosphate as a cofactor.

The protein resides in the cytoplasm. The catalysed reaction is (S)-4-amino-5-oxopentanoate = 5-aminolevulinate. The protein operates within porphyrin-containing compound metabolism; protoporphyrin-IX biosynthesis; 5-aminolevulinate from L-glutamyl-tRNA(Glu): step 2/2. This chain is Glutamate-1-semialdehyde 2,1-aminomutase, found in Histophilus somni (strain 129Pt) (Haemophilus somnus).